A 343-amino-acid polypeptide reads, in one-letter code: Methionine import ATP-binding protein MetN 1 (343 aa).

The ABC transporter domain maps to 2-241; the sequence is IKLSNITKVF…PKTPLAQKFI (240 aa). 38-45 contributes to the ATP binding site; the sequence is GASGAGKS.

The protein belongs to the ABC transporter superfamily. Methionine importer (TC 3.A.1.24) family. In terms of assembly, the complex is composed of two ATP-binding proteins (MetN), two transmembrane proteins (MetI) and a solute-binding protein (MetQ).

It localises to the cell inner membrane. The enzyme catalyses L-methionine(out) + ATP + H2O = L-methionine(in) + ADP + phosphate + H(+). It catalyses the reaction D-methionine(out) + ATP + H2O = D-methionine(in) + ADP + phosphate + H(+). Its function is as follows. Part of the ABC transporter complex MetNIQ involved in methionine import. Responsible for energy coupling to the transport system. This is Methionine import ATP-binding protein MetN 1 from Salmonella choleraesuis (strain SC-B67).